The chain runs to 238 residues: Ribonuclease PH (238 aa).

Phosphate contacts are provided by residues arginine 86 and 124 to 126; that span reads GTR.

Belongs to the RNase PH family. As to quaternary structure, homohexameric ring arranged as a trimer of dimers.

The catalysed reaction is tRNA(n+1) + phosphate = tRNA(n) + a ribonucleoside 5'-diphosphate. Its function is as follows. Phosphorolytic 3'-5' exoribonuclease that plays an important role in tRNA 3'-end maturation. Removes nucleotide residues following the 3'-CCA terminus of tRNAs; can also add nucleotides to the ends of RNA molecules by using nucleoside diphosphates as substrates, but this may not be physiologically important. Probably plays a role in initiation of 16S rRNA degradation (leading to ribosome degradation) during starvation. This Dichelobacter nodosus (strain VCS1703A) protein is Ribonuclease PH.